Consider the following 311-residue polypeptide: NEDD4 family-interacting protein 2 (311 aa).

Positions 1-133 are disordered; it reads RRSASDAELS…PPYSSITVEA (133 aa). Over 1 to 206 the chain is Cytoplasmic; that stretch reads RRSASDAELS…VEQLRVGNDG (206 aa). Residues 7 to 22 are compositionally biased toward low complexity; that stretch reads AELSAGAEGATGSEAA. The segment covering 26-37 has biased composition (gly residues); it reads DLGGRTRGGGRG. Residues 38–47 are compositionally biased toward low complexity; the sequence is SAAAAATTST. Residues 48–75 are compositionally biased toward basic and acidic residues; that stretch reads REAEGAERRGDTPARKPDPEAGRMDHHQ. Residues 92-101 are compositionally biased toward polar residues; it reads ESSAVEQPST. Positions 102–120 are enriched in low complexity; the sequence is SSLAAPTVEAAASAPALDP. The tract at residues 123 to 126 is interaction with NEDD4; it reads PPPY. The PPxY motif 1 motif lies at 123–126; it reads PPPY. Residues Tyr-126, Tyr-142, Tyr-146, and Tyr-152 each carry the phosphotyrosine; by SRC modification. 2 consecutive short sequence motifs (PPxY motif) follow at residues 149-152 and 159-161; these read PPPY and PTY. The helical transmembrane segment at 207–227 threads the bilayer; sequence IFMLAFFMAFIFNWLGFCLSF. Over 228–232 the chain is Extracellular; that stretch reads CITNT. Residues 233-253 form a helical membrane-spanning segment; that stretch reads IAGRYGAICGFGLSLIKWILI. Over 254–262 the chain is Cytoplasmic; it reads VRFSDYFTG. Residues 263–283 form a helical membrane-spanning segment; the sequence is YFNGQYWLWWIFLVLGLLLFF. Residues 284–311 are Extracellular-facing; sequence RGFVNYLKVRNMSESMAAAHRTRYFFLL.

In terms of assembly, forms heterodimers with NDFIP1. Interacts with HECT domain-containing E3 ubiquitin-protein ligases, including NEDD4. Interacts with NEDD4L. When phosphorylated at Tyr-142, interacts with SRC and LYN SH2 domain. May thus act as a scaffold that recruits SRC to NDFIP1, enhancing NDFIP1 phosphorylation. Interacts with SLC11A2/DMT1. May interact with phosphorylated EGFR. Interacts with KCNH2. In terms of processing, ubiquitinated by NEDD4 and NEDD4L; which does not affect turnover. Also ubiquitinated by ITCH. Post-translationally, undergoes transient tyrosine-phosphorylation following EGF stimulation, most probably catalyzed by SRC. Phosphorylation on Tyr-126, Tyr-146 and Tyr-152 are dependent on the phosphorylation on Tyr-142. Also phosphorylated by LYN and FYN. As to expression, ubiquitously expressed, with highest levels in brain, liver, kidney and testis.

It is found in the endosome membrane. The protein resides in the golgi apparatus membrane. It localises to the endosome. Its subcellular location is the multivesicular body membrane. Its function is as follows. Activates HECT domain-containing E3 ubiquitin-protein ligases, including ITCH, NEDD4, NEDD4L, SMURF2, WWP1 and WWP2, and consequently modulates the stability of their targets. As a result, may control many cellular processes. Recruits ITCH, NEDD4 and SMURF2 to endosomal membranes. Negatively regulates KCNH2 potassium channel activity by decreasing its cell-surface expression and interfering with channel maturation through recruitment of NEDD4L to the Golgi apparatus and multivesicular body where it mediates KCNH2 degradation. May modulate EGFR signaling. Together with NDFIP1, limits the cytokine signaling and expansion of effector Th2 T-cells by promoting degradation of JAK1, probably by ITCH- and NEDD4L-mediated ubiquitination. In Mus musculus (Mouse), this protein is NEDD4 family-interacting protein 2 (Ndfip2).